Reading from the N-terminus, the 273-residue chain is Mediator of RNA polymerase II transcription subunit 27 (273 aa).

The protein belongs to the Mediator complex subunit 27 family. In terms of assembly, component of the Mediator complex.

Its subcellular location is the nucleus. Component of the Mediator complex, a coactivator involved in the regulated transcription of nearly all RNA polymerase II-dependent genes. Mediator functions as a bridge to convey information from gene-specific regulatory proteins to the basal RNA polymerase II transcription machinery. Mediator is recruited to promoters by direct interactions with regulatory proteins and serves as a scaffold for the assembly of a functional preinitiation complex with RNA polymerase II and the general transcription factors. This is Mediator of RNA polymerase II transcription subunit 27 (med27) from Schizosaccharomyces pombe (strain 972 / ATCC 24843) (Fission yeast).